The primary structure comprises 260 residues: MRPAILLTNDDGVNSLGIWAAYEALSPIADVTVVAPATQQSAVGRSISIFEPIRANRIKINGNPAWAVGGKPTDAAIIGLYALKLAPALVVSGINIGENLSYESIMTSGTVGAALEAANQGTKGIAFSLQVEDQGDKFDDPGQSAQSFDAAKKVVRDVVERVLASGFPPAADVINVNIPSTIKGGYEVTHLARKLFHTGVEKRLDPRGRPYFWINGPLLEDAEEGTDVHAVRKGNVSITPITLDCTARTADEDTKKIFLK.

A divalent metal cation-binding residues include D10, D11, S41, and N95.

The protein belongs to the SurE nucleotidase family. The cofactor is a divalent metal cation.

Its subcellular location is the cytoplasm. It catalyses the reaction a ribonucleoside 5'-phosphate + H2O = a ribonucleoside + phosphate. In terms of biological role, nucleotidase that shows phosphatase activity on nucleoside 5'-monophosphates. This Methanoregula boonei (strain DSM 21154 / JCM 14090 / 6A8) protein is 5'-nucleotidase SurE.